Reading from the N-terminus, the 284-residue chain is Bifunctional protein FolD (284 aa).

Residues 166-168, S191, and I232 each bind NADP(+); that span reads GAS.

Belongs to the tetrahydrofolate dehydrogenase/cyclohydrolase family. As to quaternary structure, homodimer.

The catalysed reaction is (6R)-5,10-methylene-5,6,7,8-tetrahydrofolate + NADP(+) = (6R)-5,10-methenyltetrahydrofolate + NADPH. It carries out the reaction (6R)-5,10-methenyltetrahydrofolate + H2O = (6R)-10-formyltetrahydrofolate + H(+). Its pathway is one-carbon metabolism; tetrahydrofolate interconversion. Its function is as follows. Catalyzes the oxidation of 5,10-methylenetetrahydrofolate to 5,10-methenyltetrahydrofolate and then the hydrolysis of 5,10-methenyltetrahydrofolate to 10-formyltetrahydrofolate. In Neisseria meningitidis serogroup A / serotype 4A (strain DSM 15465 / Z2491), this protein is Bifunctional protein FolD.